The chain runs to 79 residues: Ketoisovalerate oxidoreductase subunit VorC (79 aa).

2 4Fe-4S ferredoxin-type domains span residues 4-33 (AYPV…MSNK) and 40-70 (HYVE…VHIE). [4Fe-4S] cluster-binding residues include Cys13, Cys16, Cys19, Cys23, Cys49, Cys52, Cys55, and Cys59.

As to quaternary structure, heterotrimer of the VorA, VorB and VorC subunits. [4Fe-4S] cluster serves as cofactor.

It catalyses the reaction 3-methyl-2-oxobutanoate + 2 oxidized [2Fe-2S]-[ferredoxin] + CoA = 2-methylpropanoyl-CoA + 2 reduced [2Fe-2S]-[ferredoxin] + CO2 + H(+). This chain is Ketoisovalerate oxidoreductase subunit VorC (vorC), found in Methanothermobacter marburgensis (strain ATCC BAA-927 / DSM 2133 / JCM 14651 / NBRC 100331 / OCM 82 / Marburg) (Methanobacterium thermoautotrophicum).